The primary structure comprises 485 residues: Membrane-bound lytic murein transglycosylase F (485 aa).

An N-terminal signal peptide occupies residues 1–29; the sequence is MFAHTALRQRCAKWLFATGLFLLLGACVE. A non-LT domain region spans residues 30–267; sequence KPSTLERVKE…RLKDRYYGHV (238 aa). The interval 268–485 is LT domain; that stretch reads DVLGYVGAYT…DKPAEQSPPM (218 aa). E314 is a catalytic residue. The tract at residues 465-485 is disordered; it reads EGNLHVPGVNKDKPAEQSPPM.

In the N-terminal section; belongs to the bacterial solute-binding protein 3 family. The protein in the C-terminal section; belongs to the transglycosylase Slt family.

The protein resides in the cell outer membrane. The enzyme catalyses Exolytic cleavage of the (1-&gt;4)-beta-glycosidic linkage between N-acetylmuramic acid (MurNAc) and N-acetylglucosamine (GlcNAc) residues in peptidoglycan, from either the reducing or the non-reducing ends of the peptidoglycan chains, with concomitant formation of a 1,6-anhydrobond in the MurNAc residue.. Functionally, murein-degrading enzyme that degrades murein glycan strands and insoluble, high-molecular weight murein sacculi, with the concomitant formation of a 1,6-anhydromuramoyl product. Lytic transglycosylases (LTs) play an integral role in the metabolism of the peptidoglycan (PG) sacculus. Their lytic action creates space within the PG sacculus to allow for its expansion as well as for the insertion of various structures such as secretion systems and flagella. This Pseudomonas putida (strain W619) protein is Membrane-bound lytic murein transglycosylase F.